A 315-amino-acid polypeptide reads, in one-letter code: Secreted frizzled-related protein 5 (315 aa).

Positions 1 to 27 (MRAAAGGARAAVLALLLGALHGAPARG) are cleaved as a signal peptide. In terms of domain architecture, FZ spans 46–163 (SKPPQCLDIP…PLDNDLCIAV (118 aa)). Intrachain disulfides connect Cys51–Cys114, Cys61–Cys107, Cys98–Cys133, Cys122–Cys160, Cys126–Cys150, Cys179–Cys251, Cys182–Cys253, and Cys196–Cys301. In terms of domain architecture, NTR spans 179 to 301 (CAQCEMEHSA…AVKFMFSYPC (123 aa)).

This sequence belongs to the secreted frizzled-related protein (sFRP) family. In terms of tissue distribution, strongly expressed in the retinal pigment epithelium (RPE). Weak expression in retina, brain, heart, liver, kidney, testis and muscle.

The protein localises to the secreted. Its function is as follows. Soluble frizzled-related proteins (sFRPS) function as modulators of Wnt signaling through direct interaction with Wnts. They have a role in regulating cell growth and differentiation in specific cell types. SFRP5 may be involved in determining the polarity of photoreceptor, and perhaps other, cells in the retina. Inhibits Wnt8 signaling, in vitro. This Bos taurus (Bovine) protein is Secreted frizzled-related protein 5 (SFRP5).